Reading from the N-terminus, the 420-residue chain is Glucose-1-phosphate adenylyltransferase (420 aa).

Residues tyrosine 107, glycine 172, 187–188 (EK), and serine 205 contribute to the alpha-D-glucose 1-phosphate site.

Belongs to the bacterial/plant glucose-1-phosphate adenylyltransferase family. As to quaternary structure, homotetramer.

It catalyses the reaction alpha-D-glucose 1-phosphate + ATP + H(+) = ADP-alpha-D-glucose + diphosphate. The protein operates within glycan biosynthesis; glycogen biosynthesis. Its function is as follows. Involved in the biosynthesis of ADP-glucose, a building block required for the elongation reactions to produce glycogen. Catalyzes the reaction between ATP and alpha-D-glucose 1-phosphate (G1P) to produce pyrophosphate and ADP-Glc. This chain is Glucose-1-phosphate adenylyltransferase, found in Rhizobium etli (strain CIAT 652).